Consider the following 86-residue polypeptide: MVSVARLVFMLGPLLCLGAQLSSSQHWSHGWYPGGKRELDSFTTSEISEGIKLCEAEGCSYLRPQRRNILKNVILDALAREFQKRK.

An N-terminal signal peptide occupies residues 1-24; it reads MVSVARLVFMLGPLLCLGAQLSSS. At Gln25 the chain carries Pyrrolidone carboxylic acid. Gly34 carries the post-translational modification Glycine amide.

Belongs to the GnRH family.

It localises to the secreted. Stimulates the secretion of gonadotropins. The chain is Progonadoliberin-2 (gnrh2) from Oncorhynchus mykiss (Rainbow trout).